A 47-amino-acid chain; its full sequence is Large ribosomal subunit protein bL34 (47 aa).

The protein belongs to the bacterial ribosomal protein bL34 family.

This Mycolicibacterium vanbaalenii (strain DSM 7251 / JCM 13017 / BCRC 16820 / KCTC 9966 / NRRL B-24157 / PYR-1) (Mycobacterium vanbaalenii) protein is Large ribosomal subunit protein bL34.